A 497-amino-acid polypeptide reads, in one-letter code: tRNA-2-methylthio-N(6)-dimethylallyladenosine synthase (497 aa).

The segment at 1-50 is disordered; sequence MTGTSNIPTHGKEHKDAPALLPLPAPNPHHTHAAHPGNPSHDRPPSRGKL. Residues 48–165 enclose the MTTase N-terminal domain; that stretch reads GKLFIKTHGC…LPDMIRARRE (118 aa). Residues Cys57, Cys94, Cys128, Cys202, Cys206, and Cys209 each coordinate [4Fe-4S] cluster. The Radical SAM core domain maps to 188–430; it reads RAEGPSAFVS…QKHINTYAAD (243 aa). Residues 433–496 enclose the TRAM domain; it reads KRMIGTVQTV…SNSLRGRVHT (64 aa).

The protein belongs to the methylthiotransferase family. MiaB subfamily. As to quaternary structure, monomer. It depends on [4Fe-4S] cluster as a cofactor.

It localises to the cytoplasm. The catalysed reaction is N(6)-dimethylallyladenosine(37) in tRNA + (sulfur carrier)-SH + AH2 + 2 S-adenosyl-L-methionine = 2-methylsulfanyl-N(6)-dimethylallyladenosine(37) in tRNA + (sulfur carrier)-H + 5'-deoxyadenosine + L-methionine + A + S-adenosyl-L-homocysteine + 2 H(+). Functionally, catalyzes the methylthiolation of N6-(dimethylallyl)adenosine (i(6)A), leading to the formation of 2-methylthio-N6-(dimethylallyl)adenosine (ms(2)i(6)A) at position 37 in tRNAs that read codons beginning with uridine. In Xylella fastidiosa (strain 9a5c), this protein is tRNA-2-methylthio-N(6)-dimethylallyladenosine synthase.